The following is a 91-amino-acid chain: Metalloproteinase inhibitor 2 (91 aa).

The NTR domain occupies 1 to 91; it reads KAVSEKEVDS…FIVPWDTLST (91 aa).

It belongs to the protease inhibitor I35 (TIMP) family. In terms of processing, the activity of TIMP2 is dependent on the presence of disulfide bonds.

It localises to the secreted. Its function is as follows. Complexes with metalloproteinases (such as collagenases) and irreversibly inactivates them. The chain is Metalloproteinase inhibitor 2 (TIMP2) from Equus caballus (Horse).